A 199-amino-acid chain; its full sequence is NAD(P)H dehydrogenase (quinone) (199 aa).

One can recognise a Flavodoxin-like domain in the interval V4–I190. Residues S10–I15 and T78–F80 each bind FMN. An NAD(+)-binding site is contributed by Y12. W98 contributes to the substrate binding site. Residues S113 to G119 and H134 each bind FMN.

This sequence belongs to the WrbA family. It depends on FMN as a cofactor.

It catalyses the reaction a quinone + NADH + H(+) = a quinol + NAD(+). It carries out the reaction a quinone + NADPH + H(+) = a quinol + NADP(+). In Rhodopseudomonas palustris (strain HaA2), this protein is NAD(P)H dehydrogenase (quinone).